The primary structure comprises 288 residues: Phosphopantetheinyl transferase (288 aa).

CoA contacts are provided by residues Arg60, 99 to 104 (RTEMGK), and 118 to 121 (NLSH). 2 residues coordinate Mg(2+): Asp139 and Glu196. A CoA-binding site is contributed by 196–200 (EAYLK).

Belongs to the P-Pant transferase superfamily. AcpS family. Monomer.

The protein localises to the cytoplasm. It localises to the cytosol. The catalysed reaction is apo-[ACP] + CoA = holo-[ACP] + adenosine 3',5'-bisphosphate + H(+). Its pathway is lipid metabolism; fatty acid biosynthesis. Its function is as follows. Phosphopantetheinyl transferase that is essential for attaching phosphopantetheine to ACP domains of the polyunsaturated fatty acid (PUFA) synthase converting the inactive apo-synthase to the active holo-synthase. The chain is Phosphopantetheinyl transferase from Thraustochytrium sp. (strain ATCC 26185 / S-3).